The chain runs to 1350 residues: ABC-type transporter MDR1 (1350 aa).

The segment covering Met-1–Ser-11 has biased composition (basic and acidic residues). Residues Met-1 to Leu-84 are disordered. The span at Val-22 to Gly-33 shows a compositional bias: polar residues. Over residues Lys-52–Lys-63 the composition is skewed to basic residues. The region spanning Val-121 to Thr-411 is the ABC transmembrane type-1 1 domain. Helical transmembrane passes span Ala-124–Leu-144, Leu-170–Phe-190, Lys-243–Ile-263, Ile-271–Val-291, Gly-350–Met-370, and Ile-380–Gly-400. An ABC transporter 1 domain is found at Ile-446 to Ala-691. Gly-481–Ser-488 contributes to the ATP binding site. Residues Lys-712–Lys-731 show a composition bias toward basic and acidic residues. The disordered stretch occupies residues Lys-712 to Arg-734. Helical transmembrane passes span Ile-779–Ala-799, Phe-830–Cys-850, Leu-903–Ile-923, Leu-929–Leu-949, Ala-1014–Ile-1034, and Phe-1044–Phe-1064. Residues Ile-779–Lys-1070 form the ABC transmembrane type-1 2 domain. The ABC transporter 2 domain maps to Ile-1105 to Leu-1343. An N-linked (GlcNAc...) asparagine glycan is attached at Asn-1127. Gly-1140–Ser-1147 contributes to the ATP binding site.

Belongs to the ABC transporter superfamily. ABCB family. Multidrug resistance exporter (TC 3.A.1.201) subfamily.

The protein resides in the cell membrane. ABC-type transporter that is involved in the secretion of liamocins, glycolipids (also called heavy oils) composed of a single mannitol or arabitol headgroup linked to either three, four or even six 3,5-dihydroxydecanoic ester tail-groups. The chain is ABC-type transporter MDR1 from Aureobasidium melanogenum (Aureobasidium pullulans var. melanogenum).